The following is a 257-amino-acid chain: Probable transcriptional regulatory protein SRU_2667 (257 aa).

Positions 1-15 are enriched in basic residues; it reads MAGHTRKWAKVKRKK. The tract at residues 1–25 is disordered; it reads MAGHTRKWAKVKRKKQKDDRRKSKV.

This sequence belongs to the TACO1 family.

The protein localises to the cytoplasm. The polypeptide is Probable transcriptional regulatory protein SRU_2667 (Salinibacter ruber (strain DSM 13855 / M31)).